A 371-amino-acid chain; its full sequence is Probable endolytic peptidoglycan transglycosylase RlpA (371 aa).

A signal peptide spans 1-25 (MNQRHLWTIVALSVTVLGTPAVGRT). Low complexity predominate over residues 177-191 (LVASQSQNKSSSSQQ). The disordered stretch occupies residues 177–196 (LVASQSQNKSSSSQQKSERY).

This sequence belongs to the RlpA family.

Lytic transglycosylase with a strong preference for naked glycan strands that lack stem peptides. In Nostoc sp. (strain PCC 7120 / SAG 25.82 / UTEX 2576), this protein is Probable endolytic peptidoglycan transglycosylase RlpA.